A 570-amino-acid polypeptide reads, in one-letter code: Proline--tRNA ligase (570 aa).

It belongs to the class-II aminoacyl-tRNA synthetase family. ProS type 1 subfamily. In terms of assembly, homodimer.

Its subcellular location is the cytoplasm. The catalysed reaction is tRNA(Pro) + L-proline + ATP = L-prolyl-tRNA(Pro) + AMP + diphosphate. Its function is as follows. Catalyzes the attachment of proline to tRNA(Pro) in a two-step reaction: proline is first activated by ATP to form Pro-AMP and then transferred to the acceptor end of tRNA(Pro). As ProRS can inadvertently accommodate and process non-cognate amino acids such as alanine and cysteine, to avoid such errors it has two additional distinct editing activities against alanine. One activity is designated as 'pretransfer' editing and involves the tRNA(Pro)-independent hydrolysis of activated Ala-AMP. The other activity is designated 'posttransfer' editing and involves deacylation of mischarged Ala-tRNA(Pro). The misacylated Cys-tRNA(Pro) is not edited by ProRS. In Thermoanaerobacter pseudethanolicus (strain ATCC 33223 / 39E) (Clostridium thermohydrosulfuricum), this protein is Proline--tRNA ligase.